The following is a 594-amino-acid chain: MSVRTSSRSNKGQNKYIEYLLQEETEAPKKKRTKKKVDSATEKNKKSDSSQEPRKDTENVRTDEVDEADEGYVRCLCGANNENYDAAEYSHGDMVQCDGCDTWQHIKCMTDGKDTIDGLMSEDSKYYCELCDPSLYAHLETSKEAEVSEDEDYHDDVYKPVNDHDDNDADVFLDEESPRKRKRSPDSAKGIHIKSKQVKKSNGSKKRNKSIDAAKSDTAENEMPTRKDFESEKEHKLRYNAEKMFSTLFSKFIVPETIEAKLYELPDGKDVISISQEFAHNLEEELYKACLNIEFGTLDKIYTEKVRSLYSNLKDKKNLELKAHVVEGKLPLNKLVNMNASELANPDLQEFKEKRDKVILENFIVEVPDKPMYVKTHKGDELIEDIAEPQEDILYSKDSIRLHNIDSIDSDKSKIEQTHAISKEPSPSTIINEESLNCAFLYPGLGLEFTGYLNYIGVSQKLRRDIFKEAIGDGKLYVEGRLPTTTAAPYLKEISCSRAILVYQLFPSNDSESKTTFADVVDSLENKGRIAGIKPKTRYEKDFYIVPSKGGEIPEILKDILGSHNDERSERFSRMKSDERTLFAFVVVKQEFIH.

The span at 1-13 (MSVRTSSRSNKGQ) shows a compositional bias: polar residues. Positions 1–65 (MSVRTSSRSN…DTENVRTDEV (65 aa)) are disordered. Over residues 36 to 63 (KVDSATEKNKKSDSSQEPRKDTENVRTD) the composition is skewed to basic and acidic residues. The segment at 72 to 134 (YVRCLCGANN…KYYCELCDPS (63 aa)) adopts a PHD-type zinc-finger fold. The interval 142-231 (SKEAEVSEDE…EMPTRKDFES (90 aa)) is disordered. Residues 155–164 (DDVYKPVNDH) are compositionally biased toward basic and acidic residues. Residues 165–175 (DDNDADVFLDE) are compositionally biased toward acidic residues. Phosphoserine is present on Ser-177. The segment covering 191–208 (IHIKSKQVKKSNGSKKRN) has biased composition (basic residues). Over residues 209–231 (KSIDAAKSDTAENEMPTRKDFES) the composition is skewed to basic and acidic residues. A TFIIS central domain is found at 254 to 365 (VPETIEAKLY…DKVILENFIV (112 aa)).

The protein belongs to the BYE1 family. As to quaternary structure, interacts with the RNA polymerase RPB1 subunit and specifically with the trimethylated H3 histone H3K4me3.

The protein resides in the nucleus. Functionally, negative regulator of transcription elongation. The chain is Transcription factor BYE1 (BYE1) from Saccharomyces cerevisiae (strain YJM789) (Baker's yeast).